Reading from the N-terminus, the 335-residue chain is uncharacterized protein (335 aa).

The tract at residues G201–T236 is disordered. Residues R210–N235 show a composition bias toward basic and acidic residues.

In terms of biological role, dispensable for normal development and fertility. This is an uncharacterized protein from Homo sapiens (Human).